Here is a 289-residue protein sequence, read N- to C-terminus: UPF0276 protein BPP1075 (289 aa).

It belongs to the UPF0276 family.

The sequence is that of UPF0276 protein BPP1075 from Bordetella parapertussis (strain 12822 / ATCC BAA-587 / NCTC 13253).